Consider the following 247-residue polypeptide: Chymase (247 aa).

Positions 1-19 (MLLLPLPLLLFFLCSRAEA) are cleaved as a signal peptide. Residues 20 to 21 (GE) constitute a propeptide, activation peptide. In terms of domain architecture, Peptidase S1 spans 22-245 (IIGGTECKPH…YRPWINKILQ (224 aa)). Cysteine 51 and cysteine 67 are disulfide-bonded. The Charge relay system role is filled by histidine 66. Residues asparagine 80 and asparagine 103 are each glycosylated (N-linked (GlcNAc...) asparagine). Aspartate 110 serves as the catalytic Charge relay system. Disulfide bonds link cysteine 144–cysteine 209 and cysteine 175–cysteine 188. Serine 203 (charge relay system) is an active-site residue.

It belongs to the peptidase S1 family. Granzyme subfamily.

The protein localises to the secreted. It is found in the cytoplasmic granule. It catalyses the reaction Preferential cleavage: Phe-|-Xaa &gt; Tyr-|-Xaa &gt; Trp-|-Xaa &gt; Leu-|-Xaa.. In terms of biological role, major secreted protease of mast cells with suspected roles in vasoactive peptide generation, extracellular matrix degradation, and regulation of gland secretion. In Macaca fascicularis (Crab-eating macaque), this protein is Chymase (CMA1).